Reading from the N-terminus, the 434-residue chain is Tol-Pal system protein TolB (434 aa).

The signal sequence occupies residues 1 to 24; sequence MKFSAYLTTLFIVLFSLFIQTVQA.

This sequence belongs to the TolB family. The Tol-Pal system is composed of five core proteins: the inner membrane proteins TolA, TolQ and TolR, the periplasmic protein TolB and the outer membrane protein Pal. They form a network linking the inner and outer membranes and the peptidoglycan layer.

The protein localises to the periplasm. Part of the Tol-Pal system, which plays a role in outer membrane invagination during cell division and is important for maintaining outer membrane integrity. The chain is Tol-Pal system protein TolB from Histophilus somni (strain 129Pt) (Haemophilus somnus).